Reading from the N-terminus, the 273-residue chain is Putative phosphoenolpyruvate synthase regulatory protein (273 aa).

ADP is bound at residue 153–160; the sequence is GVSRCGKT.

It belongs to the pyruvate, phosphate/water dikinase regulatory protein family. PSRP subfamily.

The catalysed reaction is [pyruvate, water dikinase] + ADP = [pyruvate, water dikinase]-phosphate + AMP + H(+). It carries out the reaction [pyruvate, water dikinase]-phosphate + phosphate + H(+) = [pyruvate, water dikinase] + diphosphate. In terms of biological role, bifunctional serine/threonine kinase and phosphorylase involved in the regulation of the phosphoenolpyruvate synthase (PEPS) by catalyzing its phosphorylation/dephosphorylation. This chain is Putative phosphoenolpyruvate synthase regulatory protein, found in Pectobacterium atrosepticum (strain SCRI 1043 / ATCC BAA-672) (Erwinia carotovora subsp. atroseptica).